Consider the following 246-residue polypeptide: Probable fimbrial chaperone YadV (246 aa).

The N-terminal stretch at 1–25 (MFFNTKHTTALCFVTCMAFSSSSIA) is a signal peptide.

This sequence belongs to the periplasmic pilus chaperone family.

It is found in the periplasm. Part of the yadCKLM-htrE-yadVN fimbrial operon. Could contribute to adhesion to various surfaces in specific environmental niches. In Escherichia coli (strain K12), this protein is Probable fimbrial chaperone YadV (yadV).